The following is a 216-amino-acid chain: Protein-L-isoaspartate O-methyltransferase (216 aa).

Serine 63 is an active-site residue.

Belongs to the methyltransferase superfamily. L-isoaspartyl/D-aspartyl protein methyltransferase family.

The protein localises to the cytoplasm. It carries out the reaction [protein]-L-isoaspartate + S-adenosyl-L-methionine = [protein]-L-isoaspartate alpha-methyl ester + S-adenosyl-L-homocysteine. Its function is as follows. Catalyzes the methyl esterification of L-isoaspartyl residues in peptides and proteins that result from spontaneous decomposition of normal L-aspartyl and L-asparaginyl residues. It plays a role in the repair and/or degradation of damaged proteins. This is Protein-L-isoaspartate O-methyltransferase from Rhodopseudomonas palustris (strain BisB18).